A 155-amino-acid chain; its full sequence is MKIQLIAVGQKMPDWVKVGFEEYQRRFPKDMPFELIEIPAGKRGKNADIKRILEQEGKAMLAAAGKGKVVTLDIPGKPWTTEQLASQLEAWKNDGRDVCLLIGGPEGLSPECKAAAEQSWSLSPLTLPHPMVRVIVAESLYRAWSLTTNHPYHRE.

Residues L72, G103, and 122 to 127 (LSPLTL) contribute to the S-adenosyl-L-methionine site.

It belongs to the RNA methyltransferase RlmH family. In terms of assembly, homodimer.

The protein resides in the cytoplasm. The catalysed reaction is pseudouridine(1915) in 23S rRNA + S-adenosyl-L-methionine = N(3)-methylpseudouridine(1915) in 23S rRNA + S-adenosyl-L-homocysteine + H(+). Specifically methylates the pseudouridine at position 1915 (m3Psi1915) in 23S rRNA. This Actinobacillus pleuropneumoniae serotype 5b (strain L20) protein is Ribosomal RNA large subunit methyltransferase H.